Here is a 190-residue protein sequence, read N- to C-terminus: Threonylcarbamoyl-AMP synthase (190 aa).

Residues 7–190 (TGSSAAVVDL…ALTGELFRQG (184 aa)) form the YrdC-like domain.

This sequence belongs to the SUA5 family. TsaC subfamily.

It is found in the cytoplasm. The enzyme catalyses L-threonine + hydrogencarbonate + ATP = L-threonylcarbamoyladenylate + diphosphate + H2O. Functionally, required for the formation of a threonylcarbamoyl group on adenosine at position 37 (t(6)A37) in tRNAs that read codons beginning with adenine. Catalyzes the conversion of L-threonine, HCO(3)(-)/CO(2) and ATP to give threonylcarbamoyl-AMP (TC-AMP) as the acyladenylate intermediate, with the release of diphosphate. This is Threonylcarbamoyl-AMP synthase from Salmonella typhi.